Here is a 120-residue protein sequence, read N- to C-terminus: Ribosome-binding factor A (120 aa).

Belongs to the RbfA family. Monomer. Binds 30S ribosomal subunits, but not 50S ribosomal subunits or 70S ribosomes.

It is found in the cytoplasm. One of several proteins that assist in the late maturation steps of the functional core of the 30S ribosomal subunit. Associates with free 30S ribosomal subunits (but not with 30S subunits that are part of 70S ribosomes or polysomes). Required for efficient processing of 16S rRNA. May interact with the 5'-terminal helix region of 16S rRNA. The chain is Ribosome-binding factor A from Verminephrobacter eiseniae (strain EF01-2).